The sequence spans 548 residues: uncharacterized protein (548 aa).

Short-chain dehydrogenase/reductase stretches follow at residues 1–250 and 271–548; these read MDDR…WMSV and PVED…LLSP. 12–37 contributes to the NADP(+) binding site; that stretch reads IVVTGAAGGIGRALVDIFAANGDVVV. A substrate-binding site is contributed by S141. The active-site Proton acceptor is Y154. NADP(+) is bound at residue 280 to 304; the sequence is VIVMGGATGVGAAIARRFAENGDTV. Y420 acts as the Proton acceptor in catalysis.

Belongs to the short-chain dehydrogenases/reductases (SDR) family.

This is an uncharacterized protein from Sinorhizobium fredii (strain NBRC 101917 / NGR234).